A 583-amino-acid polypeptide reads, in one-letter code: Protein FMP25, mitochondrial (583 aa).

A mitochondrion-targeting transit peptide spans 1-25; it reads MSFRLFTRTSQRLPRLNWVSPIRRY. Residues 83 to 105 form a helical membrane-spanning segment; that stretch reads AVGQGILILVVVGGLGTAYLRWP. 4 RCC1 repeats span residues 332-389, 390-452, 459-510, and 512-569; these read KGQF…AIDK, TGEI…VTIR, DHHY…TETE, and ENEV…KEQR.

Its subcellular location is the mitochondrion membrane. This chain is Protein FMP25, mitochondrial (FMP25), found in Saccharomyces cerevisiae (strain ATCC 204508 / S288c) (Baker's yeast).